A 108-amino-acid chain; its full sequence is uncharacterized protein (108 aa).

This is an uncharacterized protein from Autographa californica nuclear polyhedrosis virus (AcMNPV).